We begin with the raw amino-acid sequence, 313 residues long: Dihydroorotate dehydrogenase B (NAD(+)), catalytic subunit (313 aa).

FMN is bound by residues Ser-21 and 45–46 (KA). Residues Lys-45 and 69–73 (NAIGL) contribute to the substrate site. FMN is bound by residues Asn-99 and Asn-127. Asn-127 serves as a coordination point for substrate. The active-site Nucleophile is the Cys-130. The FMN site is built by Lys-165 and Ile-191. Substrate is bound at residue 192 to 193 (NT). FMN is bound by residues Gly-217, 243-244 (GG), and 265-266 (GT).

The protein belongs to the dihydroorotate dehydrogenase family. Type 1 subfamily. As to quaternary structure, heterotetramer of 2 PyrK and 2 PyrD type B subunits. It depends on FMN as a cofactor.

The protein localises to the cytoplasm. It catalyses the reaction (S)-dihydroorotate + NAD(+) = orotate + NADH + H(+). The protein operates within pyrimidine metabolism; UMP biosynthesis via de novo pathway; orotate from (S)-dihydroorotate (NAD(+) route): step 1/1. Catalyzes the conversion of dihydroorotate to orotate with NAD(+) as electron acceptor. In Geobacillus kaustophilus (strain HTA426), this protein is Dihydroorotate dehydrogenase B (NAD(+)), catalytic subunit (pyrD).